We begin with the raw amino-acid sequence, 224 residues long: Germin-like protein 8-12 (224 aa).

Residues 1 to 23 form the signal peptide; sequence MASSSLFLLGALLVLASWQAIVA. An intrachain disulfide couples Cys-33 to Cys-48. The 154-residue stretch at 60 to 213 folds into the Cupin type-1 domain; the sequence is FNAAKFDMPR…AFQVEKKLID (154 aa). Residue Asn-78 is glycosylated (N-linked (GlcNAc...) asparagine). Residues His-111, His-113, Glu-118, and His-158 each contribute to the Mn(2+) site.

The protein belongs to the germin family. As to quaternary structure, oligomer (believed to be a pentamer but probably hexamer).

It is found in the secreted. The protein localises to the extracellular space. It localises to the apoplast. Plays a role in broad-spectrum disease resistance. Probably has no oxalate oxidase activity even if the active site is conserved. This Oryza sativa subsp. japonica (Rice) protein is Germin-like protein 8-12.